The following is a 513-amino-acid chain: Mannan endo-1,4-beta-mannosidase A and B (513 aa).

An N-terminal signal peptide occupies residues 1-26 (MKVYKKVAFVMAFIMFFSVLPTISMS). The region spanning 41–353 (QTTKNVYSWL…FNDSWVVNRG (313 aa)) is the GH26 domain. His132 serves as a coordination point for substrate. Glu195 serves as the catalytic Proton donor. 2 residues coordinate substrate: Trp200 and Tyr270. The active-site Nucleophile is the Glu295. A substrate-binding site is contributed by 429-430 (IK).

The protein belongs to the glycosyl hydrolase 26 family.

The protein resides in the secreted. It carries out the reaction Random hydrolysis of (1-&gt;4)-beta-D-mannosidic linkages in mannans, galactomannans and glucomannans.. Could be involved in the degradation of glucomannan and catalyzes the endo hydrolysis of beta-1,4-linked mannan, galactomannan and glucomannan. The polypeptide is Mannan endo-1,4-beta-mannosidase A and B (Caldalkalibacillus mannanilyticus (strain DSM 16130 / CIP 109019 / JCM 10596 / AM-001) (Bacillus mannanilyticus)).